We begin with the raw amino-acid sequence, 121 residues long: Lysozyme (121 aa).

The C-type lysozyme domain occupies 1–121 (KTFTRCELVQ…NKPLPDISKC (121 aa)). Cystine bridges form between C6–C121, C27–C110, C62–C76, and C72–C90. Catalysis depends on residues E32 and D50.

This sequence belongs to the glycosyl hydrolase 22 family.

The catalysed reaction is Hydrolysis of (1-&gt;4)-beta-linkages between N-acetylmuramic acid and N-acetyl-D-glucosamine residues in a peptidoglycan and between N-acetyl-D-glucosamine residues in chitodextrins.. Lysozymes have primarily a bacteriolytic function; those in tissues and body fluids are associated with the monocyte-macrophage system and enhance the activity of immunoagents. The chain is Lysozyme from Galleria mellonella (Greater wax moth).